The sequence spans 441 residues: Arginine biosynthesis bifunctional protein ArgJ, mitochondrial (441 aa).

A mitochondrion-targeting transit peptide spans 1 to 8; sequence MRISSTLL. The substrate site is built by threonine 177, lysine 204, threonine 215, glutamate 301, asparagine 436, and serine 441. Catalysis depends on threonine 215, which acts as the Nucleophile.

This sequence belongs to the ArgJ family. As to quaternary structure, heterodimer of an alpha and a beta chain. The alpha and beta chains are autoproteolytically processed from a single precursor protein within the mitochondrion.

It is found in the mitochondrion matrix. The enzyme catalyses N(2)-acetyl-L-ornithine + L-glutamate = N-acetyl-L-glutamate + L-ornithine. It catalyses the reaction L-glutamate + acetyl-CoA = N-acetyl-L-glutamate + CoA + H(+). It functions in the pathway amino-acid biosynthesis; L-arginine biosynthesis; L-ornithine and N-acetyl-L-glutamate from L-glutamate and N(2)-acetyl-L-ornithine (cyclic): step 1/1. Its pathway is amino-acid biosynthesis; L-arginine biosynthesis; N(2)-acetyl-L-ornithine from L-glutamate: step 1/4. Inhibited by ornithine. Catalyzes two activities which are involved in the cyclic version of arginine biosynthesis: the synthesis of acetylglutamate from glutamate and acetyl-CoA, and of ornithine by transacetylation between acetylornithine and glutamate. The protein is Arginine biosynthesis bifunctional protein ArgJ, mitochondrial of Saccharomyces cerevisiae (strain ATCC 204508 / S288c) (Baker's yeast).